The chain runs to 134 residues: Large ribosomal subunit protein bL17 (134 aa).

It belongs to the bacterial ribosomal protein bL17 family. In terms of assembly, part of the 50S ribosomal subunit. Contacts protein L32.

In Aromatoleum aromaticum (strain DSM 19018 / LMG 30748 / EbN1) (Azoarcus sp. (strain EbN1)), this protein is Large ribosomal subunit protein bL17.